A 170-amino-acid polypeptide reads, in one-letter code: Type II secretion system protein H (170 aa).

A propeptide spans 1-5 (leader sequence); that stretch reads MRQRG. Phe6 bears the N-methylphenylalanine mark. The chain crosses the membrane as a helical span at residues 6 to 29; that stretch reads FTLLEMMLILLLMGVSAGMVLLAF.

This sequence belongs to the GSP H family. As to quaternary structure, type II secretion is composed of four main components: the outer membrane complex, the inner membrane complex, the cytoplasmic secretion ATPase and the periplasm-spanning pseudopilus. Interacts with core component PulG. Cleaved by prepilin peptidase. Post-translationally, methylated by prepilin peptidase at the amino group of the N-terminal phenylalanine once the leader sequence is cleaved by prepilin peptidase.

The protein localises to the cell inner membrane. Its function is as follows. Component of the type II secretion system required for the energy-dependent secretion of extracellular factors such as proteases and toxins from the periplasm. Part of the pseudopilus tip complex that is critical for the recognition and binding of secretion substrates. The chain is Type II secretion system protein H (pulH) from Klebsiella pneumoniae.